The following is a 149-amino-acid chain: Small ribosomal subunit protein uS15 (149 aa).

Over residues 1-14 (MGRMHTHRHGKSHS) the composition is skewed to basic residues. Positions 1–20 (MGRMHTHRHGKSHSIRPATL) are disordered.

It belongs to the universal ribosomal protein uS15 family. As to quaternary structure, part of the 30S ribosomal subunit.

The sequence is that of Small ribosomal subunit protein uS15 from Nitrosopumilus maritimus (strain SCM1).